Reading from the N-terminus, the 620-residue chain is 1-deoxy-D-xylulose-5-phosphate synthase (620 aa).

Residues H80 and 121–123 contribute to the thiamine diphosphate site; that span reads GHS. Mg(2+) is bound at residue D152. Thiamine diphosphate is bound by residues 153–154, N181, Y288, and E370; that span reads GA. Mg(2+) is bound at residue N181.

It belongs to the transketolase family. DXPS subfamily. Homodimer. Mg(2+) serves as cofactor. It depends on thiamine diphosphate as a cofactor.

The enzyme catalyses D-glyceraldehyde 3-phosphate + pyruvate + H(+) = 1-deoxy-D-xylulose 5-phosphate + CO2. The protein operates within metabolic intermediate biosynthesis; 1-deoxy-D-xylulose 5-phosphate biosynthesis; 1-deoxy-D-xylulose 5-phosphate from D-glyceraldehyde 3-phosphate and pyruvate: step 1/1. Functionally, catalyzes the acyloin condensation reaction between C atoms 2 and 3 of pyruvate and glyceraldehyde 3-phosphate to yield 1-deoxy-D-xylulose-5-phosphate (DXP). In Escherichia coli (strain K12 / MC4100 / BW2952), this protein is 1-deoxy-D-xylulose-5-phosphate synthase.